A 323-amino-acid chain; its full sequence is DNA-directed RNA polymerase subunit alpha (323 aa).

The interval Met-1 to Asn-225 is alpha N-terminal domain (alpha-NTD). The tract at residues Pro-243–Ser-323 is alpha C-terminal domain (alpha-CTD).

Belongs to the RNA polymerase alpha chain family. As to quaternary structure, homodimer. The RNAP catalytic core consists of 2 alpha, 1 beta, 1 beta' and 1 omega subunit. When a sigma factor is associated with the core the holoenzyme is formed, which can initiate transcription.

The catalysed reaction is RNA(n) + a ribonucleoside 5'-triphosphate = RNA(n+1) + diphosphate. Its function is as follows. DNA-dependent RNA polymerase catalyzes the transcription of DNA into RNA using the four ribonucleoside triphosphates as substrates. The chain is DNA-directed RNA polymerase subunit alpha from Roseiflexus castenholzii (strain DSM 13941 / HLO8).